The sequence spans 827 residues: Leucine--tRNA ligase (827 aa).

The 'HIGH' region signature appears at 42–52; it reads PYPSGKLHMGH. The short motif at 581–585 is the 'KMSKS' region element; that stretch reads KMSKS. Residue Lys584 coordinates ATP.

The protein belongs to the class-I aminoacyl-tRNA synthetase family.

It localises to the cytoplasm. It carries out the reaction tRNA(Leu) + L-leucine + ATP = L-leucyl-tRNA(Leu) + AMP + diphosphate. This is Leucine--tRNA ligase from Desulforamulus reducens (strain ATCC BAA-1160 / DSM 100696 / MI-1) (Desulfotomaculum reducens).